Reading from the N-terminus, the 431-residue chain is Septin-11 (431 aa).

Alanine 2 carries the post-translational modification N-acetylalanine. Residue serine 9 is modified to Phosphoserine. Residues 38–304 form the Septin-type G domain; that stretch reads QGFCFNILCV…ELYRRCKLEE (267 aa). Residues 48 to 55 are G1 motif; the sequence is GETGIGKS. Residues 48-55, glycine 103, 184-192, glycine 238, and arginine 253 each bind GTP; these read GETGIGKS and KADTIAKNE. The interval 100-103 is G3 motif; it reads DTVG. Positions 183-186 are G4 motif; it reads AKAD. A coiled-coil region spans residues 320-413; that stretch reads QETYEAKRNE…LLQSQAQQSG (94 aa). Residues 400-431 form a disordered region; that stretch reads AAAQLLQSQAQQSGAQQTKKDKDKKNPWLCTE. Positions 401–416 are enriched in low complexity; it reads AAQLLQSQAQQSGAQQ.

The protein belongs to the TRAFAC class TrmE-Era-EngA-EngB-Septin-like GTPase superfamily. Septin GTPase family. Septins polymerize into heterooligomeric protein complexes that form filaments, and can associate with cellular membranes, actin filaments and microtubules. Forms homooligomers. GTPase activity is required for filament formation. Interacts with SEPTIN7, SEPTIN9 and SEPTIN12. In terms of tissue distribution, expressed in the cerebral cortex (at protein level).

The protein resides in the cytoplasm. The protein localises to the cytoskeleton. It is found in the synapse. Its subcellular location is the cell projection. It localises to the dendritic spine. The protein resides in the axon. In terms of biological role, filament-forming cytoskeletal GTPase. May play a role in cytokinesis (Potential). May play a role in the cytoarchitecture of neurons, including dendritic arborization and dendritic spines, and in GABAergic synaptic connectivity. In Mus musculus (Mouse), this protein is Septin-11.